The chain runs to 313 residues: Proline iminopeptidase (313 aa).

The AB hydrolase-1 domain occupies 35 to 298 (KPVVMLHGGP…SPASGHSAFE (264 aa)). Residue serine 110 is the Nucleophile of the active site. Aspartate 266 is a catalytic residue. The active-site Proton donor is the histidine 294.

This sequence belongs to the peptidase S33 family. Homooligomer.

The protein resides in the cytoplasm. It carries out the reaction Release of N-terminal proline from a peptide.. Functionally, may be involved in proline metabolism and sensitivity to ascamycin. Has ascamycin dealanylating activity. The chain is Proline iminopeptidase (pip) from Xanthomonas citri (Xanthomonas campestris pv. citri).